The chain runs to 447 residues: Cysteine--tRNA ligase (447 aa).

Position 28 (Cys28) interacts with Zn(2+). Residues 30 to 40 (PTVYNYIHVGN) carry the 'HIGH' region motif. Zn(2+) contacts are provided by Cys211, His236, and Glu240. Positions 268 to 272 (KMSKS) match the 'KMSKS' region motif. Lys271 contacts ATP.

The protein belongs to the class-I aminoacyl-tRNA synthetase family. In terms of assembly, monomer. The cofactor is Zn(2+).

The protein resides in the cytoplasm. It catalyses the reaction tRNA(Cys) + L-cysteine + ATP = L-cysteinyl-tRNA(Cys) + AMP + diphosphate. This is Cysteine--tRNA ligase from Streptococcus mutans serotype c (strain ATCC 700610 / UA159).